The primary structure comprises 118 residues: Large ribosomal subunit protein uL22 (118 aa).

It belongs to the universal ribosomal protein uL22 family. As to quaternary structure, part of the 50S ribosomal subunit.

In terms of biological role, this protein binds specifically to 23S rRNA; its binding is stimulated by other ribosomal proteins, e.g. L4, L17, and L20. It is important during the early stages of 50S assembly. It makes multiple contacts with different domains of the 23S rRNA in the assembled 50S subunit and ribosome. Functionally, the globular domain of the protein is located near the polypeptide exit tunnel on the outside of the subunit, while an extended beta-hairpin is found that lines the wall of the exit tunnel in the center of the 70S ribosome. The sequence is that of Large ribosomal subunit protein uL22 from Treponema denticola (strain ATCC 35405 / DSM 14222 / CIP 103919 / JCM 8153 / KCTC 15104).